The chain runs to 385 residues: Phosphotransferase FrzJ (385 aa).

The ATP site is built by N38 and K59. D245 is an active-site residue.

This sequence belongs to the methylthioribose kinase family. In terms of assembly, monomer.

It carries out the reaction (1S,3S,6S,7S,8S,9S)-6-[(4-methoxyphenyl)methyl]-3-(methylamino)-5-azatricyclo[6.3.1.0(1,5)]dodecane-7,9-diol + ATP = (-)-FR901483 + ADP + 2 H(+). It functions in the pathway secondary metabolite biosynthesis. In terms of biological role, phosphotransferase; part of the gene cluster that mediates the biosynthesis of the alkaloid (-)-FR901483, a potent immunosuppressant that shows efficacy in animal models and a probable inhibitor of purine nucleotide biosynthesis by targeting phosphoribosylpyrophosphate amidotransferase (PPAT). FrzJ catalyzes the last step of the pathway by phosphorylating the C4'-OH of dephospho-(-)-FR901483 to produce (-)-FR901483. The biosynthesis of (-)-FR901483 starts with the condensation of two L-tyrosines to yield (S,S)-dityrosyl-piperazine. This process occurs in 3 steps with the non-canonical nonribosomal peptide synthetase FrzA catalyzing the reduction of L-tyrosine into L-tyrosinal, the spontaneous condensation of 2 L-tyrosinal units, and the subsequent reduction by the NmrA-like family domain-containing oxidoreductase FrzB. The cytochrome P450 monooxygenase FrzC then performs coupling between N10 and C1' to morph the piperazine into a 1,4-diazabicyclo[3.2.1]octane spiro-fused to a 2,5-cyclohexadienone. The dienone portion is further reduced to cyclohexanone by the flavin-dependent reductase FrzD. The methyltranserases (MTs) FrzE and FrzF are then involved in the methylation at the C10' amine and the C4 phenolic oxygen, respectively. The order of the two MTs appear to be interchangeable. Cleavage of the C9-N10' bond by the dioxygenase FrzG then leads to formation of a conjugated iminium. In addition to the oxidation of C9, an additional dehydrogenation between C7 and C8 can occur to give a likely shunt product. The next biosynthetic step is the intramolecular aldol condensation catalyzed by the newly identified aldolase FrzH to yield an aza-tricyclic product with the formation of a C9-C3' bond. The short-chain dehydrogenase/reductase FrzI then produces dephospho-(-)-FR901483 that is phosphorylated at C4'-OH into (-)-FR901483 by the phosphotransferase FrzJ. The chain is Phosphotransferase FrzJ from Cladobotryum sp.